Here is an 834-residue protein sequence, read N- to C-terminus: MTRSPIRRLVFGTLRRLLYLWVRSETINQSSFTLDLDRSRPVFYVLQNPSLTDLAVVDTECTKAGLPRPVLPVSVGNLLEPAAFFYLTPEPDWLGRQDKRGAPPTLTRLVSALTQNAAEDAQIIPVSVFWGQSPDSESSPWKLLFADSWAVTGRLRRLLSIMILGRKTRVQFSAPINLRELIEHNKGHERTVRMAQRILRVHFRNLKAAVIGPDISHRRNLVKGLLNQPLVKQAILDEAEREKISPEKAKAQALRYGNEIASDYTYTAIRFLEVVLSWFWNKIYDGIKVNHLEGVQKIAQGHEVIYVPCHRSHIDYLLLSYLLFRNGLTPPHIAAGINLNMPVIGGLLRRGGAFFMRRTFKGNPLYTSVFNEYLHTLFTKGFPVEYFVEGGRSRTGRMLQPKTGMLAITLRSFLRSSRMPIVFVPVYIGYERVLEGRTYLGELRGASKKKESIFDIFKVIGALKQRFGQVAVNFGEPIKLAEFLDQEQPDWRTQELGPQYRPAWLNETTNRLGERVAQHLNEAAAINPVNLVALALLSTTRLALDDRAMARVLDLYLALLRRVPYSPHTTLPEGDGRALIQHVKDMDLLAEQSDALGKILYLDEQNAVLMTYYRNNVLHIFALPALLASFFQSSSRMSREQILRYTRALYPYLQSELFIRWPLDELDAVVDQWLEAFVEQGLLRFEKDLYQRPAPSSRHFVLLTLLSKSIAQTLQRFYMAISLLLNSGQNSISAEELEDLCTVMAQRLSILHGLNAPEFFDKSLFRHFIQTLLDQGVLRRDEAGKLSYHEALGELAEGAAKRVLPAEIRLSIRQVALHRSEDAADQLAAPAQND.

An HXXXXD motif motif is present at residues 309–314 (CHRSHI).

The protein belongs to the GPAT/DAPAT family.

Its subcellular location is the cell inner membrane. It carries out the reaction sn-glycerol 3-phosphate + an acyl-CoA = a 1-acyl-sn-glycero-3-phosphate + CoA. The protein operates within phospholipid metabolism; CDP-diacylglycerol biosynthesis; CDP-diacylglycerol from sn-glycerol 3-phosphate: step 1/3. This is Glycerol-3-phosphate acyltransferase from Pseudomonas fluorescens (strain ATCC BAA-477 / NRRL B-23932 / Pf-5).